Here is a 250-residue protein sequence, read N- to C-terminus: Proteasome subunit alpha (250 aa).

The protein belongs to the peptidase T1A family. The 20S proteasome core is composed of 14 alpha and 14 beta subunits that assemble into four stacked heptameric rings, resulting in a barrel-shaped structure. The two inner rings, each composed of seven catalytic beta subunits, are sandwiched by two outer rings, each composed of seven alpha subunits. The catalytic chamber with the active sites is on the inside of the barrel. Has a gated structure, the ends of the cylinder being occluded by the N-termini of the alpha-subunits. Is capped by the proteasome-associated ATPase, ARC.

The protein localises to the cytoplasm. It participates in protein degradation; proteasomal Pup-dependent pathway. The formation of the proteasomal ATPase ARC-20S proteasome complex, likely via the docking of the C-termini of ARC into the intersubunit pockets in the alpha-rings, may trigger opening of the gate for substrate entry. Interconversion between the open-gate and close-gate conformations leads to a dynamic regulation of the 20S proteasome proteolysis activity. Its function is as follows. Component of the proteasome core, a large protease complex with broad specificity involved in protein degradation. The chain is Proteasome subunit alpha from Mycobacterium sp. (strain JLS).